We begin with the raw amino-acid sequence, 36 residues long: Photosystem I reaction center subunit VIII (36 aa).

A helical membrane pass occupies residues 8–28 (SIFVPLVGLVFPAIAMASLFL).

This sequence belongs to the PsaI family.

Its subcellular location is the plastid. The protein localises to the chloroplast thylakoid membrane. In terms of biological role, may help in the organization of the PsaL subunit. The polypeptide is Photosystem I reaction center subunit VIII (Solanum bulbocastanum (Wild potato)).